The primary structure comprises 154 residues: UPF0127 protein TSIB_1463 (154 aa).

The protein belongs to the UPF0127 family.

The polypeptide is UPF0127 protein TSIB_1463 (Thermococcus sibiricus (strain DSM 12597 / MM 739)).